The primary structure comprises 87 residues: Small ribosomal subunit protein eS21 (87 aa).

Met1 carries the post-translational modification N-acetylmethionine.

Belongs to the eukaryotic ribosomal protein eS21 family. Component of the small ribosomal subunit (SSU). Mature yeast ribosomes consist of a small (40S) and a large (60S) subunit. The 40S small subunit contains 1 molecule of ribosomal RNA (18S rRNA) and at least 33 different proteins. The large 60S subunit contains 3 rRNA molecules (25S, 5.8S and 5S rRNA) and at least 46 different proteins. Interacts with uS2A and uS2B, strongest interaction is with uS2B.

It is found in the cytoplasm. Its subcellular location is the nucleus. Its function is as follows. Component of the ribosome, a large ribonucleoprotein complex responsible for the synthesis of proteins in the cell. The small ribosomal subunit (SSU) binds messenger RNAs (mRNAs) and translates the encoded message by selecting cognate aminoacyl-transfer RNA (tRNA) molecules. The large subunit (LSU) contains the ribosomal catalytic site termed the peptidyl transferase center (PTC), which catalyzes the formation of peptide bonds, thereby polymerizing the amino acids delivered by tRNAs into a polypeptide chain. The nascent polypeptides leave the ribosome through a tunnel in the LSU and interact with protein factors that function in enzymatic processing, targeting, and the membrane insertion of nascent chains at the exit of the ribosomal tunnel. eS21 is required for the processing of the 20S rRNA-precursor to mature 18S rRNA in a late step of the maturation of 40S ribosomal subunits. Has a physiological role leading to 18S rRNA stability. The polypeptide is Small ribosomal subunit protein eS21 (rps21) (Schizosaccharomyces pombe (strain 972 / ATCC 24843) (Fission yeast)).